A 442-amino-acid polypeptide reads, in one-letter code: Trigger factor (442 aa).

In terms of domain architecture, PPIase FKBP-type spans 165 to 250 (DDRVIIDFEG…LQKVMAPELP (86 aa)).

It belongs to the FKBP-type PPIase family. Tig subfamily.

Its subcellular location is the cytoplasm. It catalyses the reaction [protein]-peptidylproline (omega=180) = [protein]-peptidylproline (omega=0). Functionally, involved in protein export. Acts as a chaperone by maintaining the newly synthesized protein in an open conformation. Functions as a peptidyl-prolyl cis-trans isomerase. This is Trigger factor from Coxiella burnetii (strain CbuG_Q212) (Coxiella burnetii (strain Q212)).